A 503-amino-acid polypeptide reads, in one-letter code: Angiopoietin-4 (503 aa).

The first 24 residues, 1-24 (MLSQLAMLQGSLLLVVATMSVAQQ), serve as a signal peptide directing secretion. Positions 84–238 (TQQVKQLEQA…RQSAALTNIE (155 aa)) form a coiled coil. Residues asparagine 96, asparagine 126, asparagine 140, asparagine 158, asparagine 247, asparagine 274, asparagine 311, asparagine 337, and asparagine 427 are each glycosylated (N-linked (GlcNAc...) asparagine). The Fibrinogen C-terminal domain occupies 282–502 (MAGEQVFQDC…ASRMMIRPLD (221 aa)). A disulfide bond links cysteine 291 and cysteine 320. A disulfide bridge links cysteine 444 with cysteine 457.

In terms of assembly, homodimer; disulfide-linked. Interacts with TEK/TIE2. In terms of tissue distribution, highly expressed in the lung with much lower levels found in other tissues.

The protein resides in the secreted. Functionally, binds to TEK/TIE2, modulating ANGPT1 signaling. Can induce tyrosine phosphorylation of TEK/TIE2. Promotes endothelial cell survival, migration and angiogenesis. The protein is Angiopoietin-4 (ANGPT4) of Homo sapiens (Human).